The sequence spans 717 residues: Inhibitor of nuclear factor kappa-B kinase subunit epsilon (717 aa).

The Protein kinase domain maps to W9–S315. L15–V23 serves as a coordination point for ATP. A Glycyl lysine isopeptide (Lys-Gly) (interchain with G-Cter in ubiquitin) cross-link involves residue K30. ATP is bound at residue K38. D135 serves as the catalytic Proton acceptor. At S172 the chain carries Phosphoserine; by autocatalysis and IKKB. Residue K231 forms a Glycyl lysine isopeptide (Lys-Gly) (interchain with G-Cter in SUMO1) linkage. Positions S385–D650 are interaction with DDX3X. K403 participates in a covalent cross-link: Glycyl lysine isopeptide (Lys-Gly) (interchain with G-Cter in ubiquitin). The interval L452–S473 is leucine-zipper. T503 is subject to Phosphothreonine. S665 is subject to Phosphoserine.

The protein belongs to the protein kinase superfamily. Ser/Thr protein kinase family. I-kappa-B kinase subfamily. In terms of assembly, homodimer. Interacts with MAVS/IPS1. Interacts (via protein kinase domain) with TTLL12 (via N-terminus); the interaction prevents MAVS binding to IKBKE. Interacts with the adapter proteins AZI2/NAP1, TANK and TBKBP1/SINTBAD. Interacts with SIKE1. Interacts with TICAM1/TRIF, IRF3 and RIGI; interactions are disrupted by the interaction between IKBKE and SIKE1. Interacts with TOPORS; induced by DNA damage. Interacts with CYLD, IKBKB, IKBKG and MYD88. Interacts with IFIH1. Interacts with DDX3X; the interaction may be induced upon virus infection. Interacts with TRIM6 (via SPRY box). Interacts with unanchored K48-linked polyubiquitin chains; this leads to IKBKE activation. Interacts with TBK1. Interacts with FKBP5. In terms of processing, sumoylation by TOPORS upon DNA damage is required for protection of cells against DNA damage-induced cell death. Desumoylated by SENP1. Autophosphorylated and phosphorylated by IKBKB/IKKB. Phosphorylation at Ser-172 is enhanced by the interaction with DDX3X. Phosphorylated at Thr-503 upon IFN activation. Post-translationally, 'Lys-63'-linked polyubiquitinated at Lys-30 and Lys-403 by TRAF2:BIRC2 and TRAF2:BIRC3 complexes. Ubiquitination is induced by LPS, TNFA and interleukin-1 and required for full kinase activity and KF-kappa-B pathway activation. In terms of tissue distribution, expressed in bone marrow-derived macrophages and at low levels in liver and white adipose tissue (at protein level). Detected in muscle and lung.

It localises to the cytoplasm. The protein localises to the nucleus. Its subcellular location is the PML body. It catalyses the reaction L-seryl-[I-kappa-B protein] + ATP = O-phospho-L-seryl-[I-kappa-B protein] + ADP + H(+). With respect to regulation, kinase activity is inhibited competitively by amlexanox. Functionally, serine/threonine kinase that plays an essential role in regulating inflammatory responses to viral infection, through the activation of the type I IFN, NF-kappa-B and STAT signaling. Also involved in TNFA and inflammatory cytokines, like Interleukin-1, signaling. Following activation of viral RNA sensors, such as RIG-I-like receptors, associates with DDX3X and phosphorylates interferon regulatory factors (IRFs), IRF3 and IRF7, as well as DDX3X. This activity allows subsequent homodimerization and nuclear translocation of the IRF3 leading to transcriptional activation of pro-inflammatory and antiviral genes including IFNB. In order to establish such an antiviral state, IKBKE forms several different complexes whose composition depends on the type of cell and cellular stimuli. Thus, several scaffolding molecules including IPS1/MAVS, TANK, AZI2/NAP1 or TBKBP1/SINTBAD can be recruited to the IKBKE-containing-complexes. Activated by polyubiquitination in response to TNFA and interleukin-1, regulates the NF-kappa-B signaling pathway through, at least, the phosphorylation of CYLD. Phosphorylates inhibitors of NF-kappa-B thus leading to the dissociation of the inhibitor/NF-kappa-B complex and ultimately the degradation of the inhibitor. In addition, is also required for the induction of a subset of ISGs which displays antiviral activity, may be through the phosphorylation of STAT1 at 'Ser-708'. Phosphorylation of STAT1 at 'Ser-708' also seems to promote the assembly and DNA binding of ISGF3 (STAT1:STAT2:IRF9) complexes compared to GAF (STAT1:STAT1) complexes, in this way regulating the balance between type I and type II IFN responses. Protects cells against DNA damage-induced cell death. Also plays an important role in energy balance regulation by sustaining a state of chronic, low-grade inflammation in obesity, wich leads to a negative impact on insulin sensitivity. Phosphorylates AKT1. The sequence is that of Inhibitor of nuclear factor kappa-B kinase subunit epsilon (Ikbke) from Mus musculus (Mouse).